We begin with the raw amino-acid sequence, 85 residues long: Hepcidin (85 aa).

The N-terminal stretch at 1–24 is a signal peptide; sequence MKTFSVAVAVAVVLAFICLQESSA. Positions 25–64 are excised as a propeptide; it reads VPVTEVQELEEPMSNEYQEMPVESWKMPYNNRHKRHSSPG. 4 disulfides stabilise this stretch: Cys66/Cys83, Cys69/Cys72, Cys70/Cys79, and Cys73/Cys82.

As to expression, predominantly expressed in liver.

Its subcellular location is the secreted. Its function is as follows. Seems to act as a signaling molecule involved in the maintenance of iron homeostasis. Seems to be required in conjunction with HFE to regulate both intestinal iron absorption and iron storage in macrophages. Antimicrobial activity against Gram-negative bacteria such as E.coli. This Morone chrysops x Morone saxatilis (White bass x Striped bass) protein is Hepcidin (hamp).